The primary structure comprises 151 residues: FIS1-related protein fis-2 (151 aa).

A helical transmembrane segment spans residues Leu126–Phe146.

This sequence belongs to the FIS1 family.

It is found in the mitochondrion outer membrane. The protein localises to the peroxisome membrane. Its subcellular location is the mitochondrion. Involved in the fragmentation of the mitochondrial network. Involved in perinuclear clustering of the mitochondrial network. May act, redundantly with fis-1, downstream of mitochondrial fission, before the fission products participate in mitochondrial homeostasis, mitophagy, or apoptosis. Plays a role in apoptosis by promoting mitochondrial elimination and cell-death execution, acting downstream of caspase ced-3, and perhaps independently of dynamin GTPase drp-1, caspase ced-9 and apoptosis-inducing factor AIFM/wah-1. This chain is FIS1-related protein fis-2, found in Caenorhabditis elegans.